The sequence spans 205 residues: GTP cyclohydrolase-2 (205 aa).

49-53 serves as a coordination point for GTP; it reads RLHSE. Residues Cys-54, Cys-65, and Cys-67 each coordinate Zn(2+). Residues Gln-70, 92-94, and Thr-114 contribute to the GTP site; that span reads EGR. Asp-126 serves as the catalytic Proton acceptor. Arg-128 acts as the Nucleophile in catalysis. GTP-binding residues include Thr-149 and Lys-154.

The protein belongs to the GTP cyclohydrolase II family. The cofactor is Zn(2+).

The enzyme catalyses GTP + 4 H2O = 2,5-diamino-6-hydroxy-4-(5-phosphoribosylamino)-pyrimidine + formate + 2 phosphate + 3 H(+). It functions in the pathway cofactor biosynthesis; riboflavin biosynthesis; 5-amino-6-(D-ribitylamino)uracil from GTP: step 1/4. Its function is as follows. Catalyzes the conversion of GTP to 2,5-diamino-6-ribosylamino-4(3H)-pyrimidinone 5'-phosphate (DARP), formate and pyrophosphate. The protein is GTP cyclohydrolase-2 of Pseudomonas putida (strain W619).